Consider the following 312-residue polypeptide: DDRGK domain-containing protein 1 (312 aa).

Residues 1–2 (ME) are Lumenal-facing. A helical membrane pass occupies residues 3-23 (LIILVGIAIALLVVIITLYLL). Residues 24–312 (QKKNAAPETK…ISAGGEEASS (289 aa)) are Cytoplasmic-facing. A disordered region spans residues 30–163 (PETKPAAAPQ…KQQEDLEAEV (134 aa)). A compositionally biased stretch (low complexity) spans 52–85 (RRAQIARNQRNRLRQNAPAAPAGQVAPAAGAPAA). The segment covering 90–99 (DHEDEGQVDA) has biased composition (acidic residues). Residues 110–163 (LDEKMGAKKRAKMEAKEQKRLQREQELHDREQRKVKEAKEEAERKQQEDLEAEV) show a composition bias toward basic and acidic residues.

It belongs to the DDRGK1 family. Interacts with Atg9; the interaction is transient.

The protein localises to the endoplasmic reticulum membrane. Its function is as follows. Substrate adapter for ufmylation, the covalent attachment of the ubiquitin-like modifier UFM1 to substrate proteins. Required for ufmylation of Atg9; protects the nervous system during aging, possibly by stabilizing Atg9 and supporting its function. In Drosophila erecta (Fruit fly), this protein is DDRGK domain-containing protein 1.